A 431-amino-acid chain; its full sequence is Serine hydroxymethyltransferase (431 aa).

Residues Leu-128 and 132 to 134 (GHL) each bind (6S)-5,6,7,8-tetrahydrofolate. Lys-237 is modified (N6-(pyridoxal phosphate)lysine). Glu-253 is a binding site for (6S)-5,6,7,8-tetrahydrofolate.

The protein belongs to the SHMT family. Homodimer. Requires pyridoxal 5'-phosphate as cofactor.

It localises to the cytoplasm. It carries out the reaction (6R)-5,10-methylene-5,6,7,8-tetrahydrofolate + glycine + H2O = (6S)-5,6,7,8-tetrahydrofolate + L-serine. The protein operates within one-carbon metabolism; tetrahydrofolate interconversion. It participates in amino-acid biosynthesis; glycine biosynthesis; glycine from L-serine: step 1/1. Functionally, catalyzes the reversible interconversion of serine and glycine with tetrahydrofolate (THF) serving as the one-carbon carrier. This reaction serves as the major source of one-carbon groups required for the biosynthesis of purines, thymidylate, methionine, and other important biomolecules. Also exhibits THF-independent aldolase activity toward beta-hydroxyamino acids, producing glycine and aldehydes, via a retro-aldol mechanism. The protein is Serine hydroxymethyltransferase of Cereibacter sphaeroides (strain ATCC 17023 / DSM 158 / JCM 6121 / CCUG 31486 / LMG 2827 / NBRC 12203 / NCIMB 8253 / ATH 2.4.1.) (Rhodobacter sphaeroides).